Reading from the N-terminus, the 209-residue chain is Large ribosomal subunit protein uL3 (209 aa).

Belongs to the universal ribosomal protein uL3 family. In terms of assembly, part of the 50S ribosomal subunit. Forms a cluster with proteins L14 and L19.

In terms of biological role, one of the primary rRNA binding proteins, it binds directly near the 3'-end of the 23S rRNA, where it nucleates assembly of the 50S subunit. The protein is Large ribosomal subunit protein uL3 of Nitratidesulfovibrio vulgaris (strain ATCC 29579 / DSM 644 / CCUG 34227 / NCIMB 8303 / VKM B-1760 / Hildenborough) (Desulfovibrio vulgaris).